Consider the following 404-residue polypeptide: uncharacterized protein (404 aa).

Residues 1-21 form the signal peptide; that stretch reads MRKLGLALSIMGLLLVSIVAG. Cys22 carries the post-translational modification N-acetylcysteine. Cys22 carries S-archaeol cysteine lipidation.

Belongs to the BMP lipoprotein family.

It is found in the cell membrane. This is an uncharacterized protein from Pyrococcus abyssi (strain GE5 / Orsay).